The primary structure comprises 391 residues: Thioredoxin-interacting protein (391 aa).

A Glycyl lysine isopeptide (Lys-Gly) (interchain with G-Cter in ubiquitin) cross-link involves residue Lys-212. Ser-361 carries the post-translational modification Phosphoserine.

This sequence belongs to the arrestin family. Homodimer; disulfide-linked. Interacts with TXN/thioredoxin through its redox-active site. Interacts with transcriptional repressors ZBTB16, ZBTB32 and HDAC1. Interacts with DDIT4. Post-translationally, ubiquitinated; undergoes heterotypic 'Lys-48'-/'Lys-63'-branched polyubiquitination catalyzed by ITCH and UBR5 resulting in proteasomal degradation. Deubiquitinated by USP5, leading to TXNIP stabilization.

It is found in the cytoplasm. May act as an oxidative stress mediator by inhibiting thioredoxin activity or by limiting its bioavailability. Interacts with COPS5 and restores COPS5-induced suppression of CDKN1B stability, blocking the COPS5-mediated translocation of CDKN1B from the nucleus to the cytoplasm. Functions as a transcriptional repressor, possibly by acting as a bridge molecule between transcription factors and corepressor complexes, and over-expression will induce G0/G1 cell cycle arrest. Required for the maturation of natural killer cells. Acts as a suppressor of tumor cell growth. Inhibits the proteasomal degradation of DDIT4, and thereby contributes to the inhibition of the mammalian target of rapamycin complex 1 (mTORC1). The chain is Thioredoxin-interacting protein (TXNIP) from Sus scrofa (Pig).